A 771-amino-acid chain; its full sequence is Solute carrier family 7 member 14 (771 aa).

A run of 6 helical transmembrane segments spans residues 58–78 (LISL…SGLV), 83–103 (AGPG…LSGV), 119–141 (AYTY…NLIL), 187–207 (YPDL…ALGV), 216–236 (VLNV…LFFI), and 251–271 (WSGV…FDII). N-linked (GlcNAc...) asparagine glycosylation is present at Asn282. 4 helical membrane passes run 291–311 (ASLV…TLMV), 336–356 (FVVA…SLFP), 384–404 (PVVA…LVSL), and 407–427 (LIEM…VCVL). Phosphoserine occurs at positions 465, 468, 475, and 488. Helical transmembrane passes span 565-585 (VTIC…FIIF), 596-616 (WAIL…FVIL), 628-648 (MAPC…YLML), and 655-675 (WIRF…YGIW). Asn676 carries N-linked (GlcNAc...) asparagine glycosylation. Residues 735-771 (SDAKANSRTSSKAKSKSKHKQNSEALIANDELDCSPE) are disordered. Residues 745–754 (SKAKSKSKHK) are compositionally biased toward basic residues. A phosphoserine mark is found at Ser757 and Ser769.

This sequence belongs to the amino acid-polyamine-organocation (APC) superfamily. In terms of tissue distribution, expressed in retina, brain and spinal cord. In the retina, expressed in the inner nuclear layer and photoreceptor layer (at protein level). Expressed in liver, spleen, lung, kidney intestine and brain (at protein level).

The protein localises to the lysosome membrane. The catalysed reaction is 4-aminobutanoate(in) = 4-aminobutanoate(out). In terms of biological role, imports 4-aminobutanoate (GABA) into lysosomes. May act as a GABA sensor that regulates mTORC2-dependent INS signaling and gluconeogenesis. The transport mechanism and substrate selectivity remain to be elucidated. The sequence is that of Solute carrier family 7 member 14 from Mus musculus (Mouse).